We begin with the raw amino-acid sequence, 319 residues long: Sulfate adenylyltransferase subunit 2 (319 aa).

Disordered regions lie at residues 1–22 and 296–319; these read MNPG…TRRP and RGAT…EGYF.

Belongs to the PAPS reductase family. CysD subfamily.

The enzyme catalyses sulfate + ATP + H(+) = adenosine 5'-phosphosulfate + diphosphate. It functions in the pathway antibiotic biosynthesis; mitomycin C biosynthesis. Its function is as follows. With CysN forms the ATP sulfurylase (ATPS) that catalyzes the adenylation of sulfate producing adenosine 5'-phosphosulfate (APS) and diphosphate, the first enzymatic step in sulfur assimilation pathway. APS synthesis involves the formation of a high-energy phosphoric-sulfuric acid anhydride bond driven by GTP hydrolysis by CysN coupled to ATP hydrolysis by CysD. The protein is Sulfate adenylyltransferase subunit 2 (mmcV) of Streptomyces lavendulae.